We begin with the raw amino-acid sequence, 221 residues long: Serine/arginine-rich splicing factor 2 (221 aa).

Ser2 is subject to N-acetylserine. Phosphoserine is present on Ser2. The RRM domain occupies 14 to 92; the sequence is TSLKVDNLTY…RELRVQMARY (79 aa). A phosphothreonine mark is found at Thr22 and Thr25. Ser26 carries the post-translational modification Phosphoserine. N6-acetyllysine is present on Lys52. Residues 92-221 are disordered; that stretch reads YGRPPDSHHS…SPEEEGAVSS (130 aa). 2 stretches are compositionally biased toward basic residues: residues 117–171 and 179–189; these read RRSR…RSKS and SRSRSRSRSRS. A phosphoserine mark is found at Ser189, Ser191, Ser204, Ser206, Ser208, Ser212, and Ser220.

This sequence belongs to the splicing factor SR family. In terms of assembly, in vitro, self-associates and binds SRSF1/SFRS1 (ASF/SF2), SNRNP70 and U2AF1 but not U2AF2. Binds SREK1/SFRS12. Interacts with CCNL1 and CCNL2. Interacts with SCAF11. Interacts with ZRSR2/U2AF1-RS2. Interacts with CCDC55 (via C-terminus). Interacts with BRDT. Extensively phosphorylated on serine residues in the RS domain. Phosphorylated by SRPK2 and this causes its redistribution from the nuclear speckle to nucleoplasm and controls cell fate decision in response to cisplatin treatment. KAT5/TIP60 inhibits its phosphorylation by preventing SRPK2 nuclear translocation. Post-translationally, acetylation on Lys-52 by KAT5/TIP60 promotes its proteasomal degradation. This effect is counterbalanced by HDAC6, which positively controls SRSF2 protein level by deacetylating it and preventing its proteasomal degradation.

The protein localises to the nucleus. It is found in the nucleoplasm. It localises to the nucleus speckle. Functionally, necessary for the splicing of pre-mRNA. It is required for formation of the earliest ATP-dependent splicing complex and interacts with spliceosomal components bound to both the 5'- and 3'-splice sites during spliceosome assembly. It also is required for ATP-dependent interactions of both U1 and U2 snRNPs with pre-mRNA. Interacts with other spliceosomal components, via the RS domains, to form a bridge between the 5'- and 3'-splice site binding components, U1 snRNP and U2AF. Binds to purine-rich RNA sequences, either 5'-AGSAGAGTA-3' (S=C or G) or 5'-GTTCGAGTA-3'. Can bind to beta-globin mRNA and commit it to the splicing pathway. The phosphorylated form (by SRPK2) is required for cellular apoptosis in response to cisplatin treatment. The chain is Serine/arginine-rich splicing factor 2 (SRSF2) from Sus scrofa (Pig).